Consider the following 439-residue polypeptide: Enolase (439 aa).

Substrate-binding residues include H160 and E169. The Proton donor role is filled by E212. Residues D247, E296, and D323 each contribute to the Mg(2+) site. Residues E296 and D323 each contribute to the substrate site. K348 functions as the Proton acceptor in the catalytic mechanism. Substrate is bound by residues 375–378 (SHRS) and K399.

The protein belongs to the enolase family. As to quaternary structure, homodimer. Mg(2+) serves as cofactor.

The protein localises to the cytoplasm. It carries out the reaction (2R)-2-phosphoglycerate = phosphoenolpyruvate + H2O. The protein operates within carbohydrate degradation; glycolysis; pyruvate from D-glyceraldehyde 3-phosphate: step 4/5. The protein is Enolase (ENO) of Rhodotorula mucilaginosa (Yeast).